Reading from the N-terminus, the 446-residue chain is Chromosomal replication initiator protein DnaA (446 aa).

Residues 1–81 (MENISDLWNS…AKLAIRFIIP (81 aa)) are domain I, interacts with DnaA modulators. A domain II region spans residues 81-109 (PQSQAEEDIDLPSVKQKHAHDESNHLPQS). Residues 110–326 (MLNPKYTFDT…GALIRVVAYS (217 aa)) form a domain III, AAA+ region region. G154, G156, K157, and T158 together coordinate ATP. Residues 327 to 446 (SLINKDMNAD…HVEEVKDILK (120 aa)) form a domain IV, binds dsDNA region.

It belongs to the DnaA family. In terms of assembly, oligomerizes as a right-handed, spiral filament on DNA at oriC.

It is found in the cytoplasm. Functionally, plays an essential role in the initiation and regulation of chromosomal replication. ATP-DnaA binds to the origin of replication (oriC) to initiate formation of the DNA replication initiation complex once per cell cycle. Binds the DnaA box (a 9 base pair repeat at the origin) and separates the double-stranded (ds)DNA. Forms a right-handed helical filament on oriC DNA; dsDNA binds to the exterior of the filament while single-stranded (ss)DNA is stabiized in the filament's interior. The ATP-DnaA-oriC complex binds and stabilizes one strand of the AT-rich DNA unwinding element (DUE), permitting loading of DNA polymerase. After initiation quickly degrades to an ADP-DnaA complex that is not apt for DNA replication. Binds acidic phospholipids. The protein is Chromosomal replication initiator protein DnaA of Bacillus mycoides (strain KBAB4) (Bacillus weihenstephanensis).